The following is a 188-amino-acid chain: Putative manganese efflux pump MntP (188 aa).

6 helical membrane-spanning segments follow: residues 2–22 (LYIE…AVSV), 40–60 (IASV…TMGL), 66–86 (ICAF…GKMI), 107–127 (LCGL…SLAI), 133–153 (LLQA…GVYF), and 167–187 (LIGG…HLFF).

This sequence belongs to the MntP (TC 9.B.29) family.

It is found in the cell inner membrane. Functionally, probably functions as a manganese efflux pump. The chain is Putative manganese efflux pump MntP from Parabacteroides distasonis (strain ATCC 8503 / DSM 20701 / CIP 104284 / JCM 5825 / NCTC 11152).